Here is a 375-residue protein sequence, read N- to C-terminus: Fasciculation and elongation protein zeta-2 (375 aa).

Positions 1-42 are disordered; the sequence is MAADGDWQDFYEFQEPAGSVRDQENCNASPEAGAGAHAGGDS. 3 positions are modified to phosphoserine: S130, S171, and S190. Positions 156–177 form a coiled coil; the sequence is TADQVIEEIEEMMQESPDLEDD. Residues 206 to 281 are a coiled coil; the sequence is ERVKRLSVSE…AKKKKKLKNG (76 aa). Residues 265–297 form a disordered region; sequence QKEHKETAKKKKKLKNGSSQNGRNERSHMPGTR.

Belongs to the zygin family. Homodimer; disulfide-linked. May form heterodimers with FEZ1. Interacts with synaptotagmin.

Functionally, involved in axonal outgrowth and fasciculation. This is Fasciculation and elongation protein zeta-2 (Fez2) from Rattus norvegicus (Rat).